Consider the following 372-residue polypeptide: 2-aminoethylphosphonate--pyruvate transaminase 2 (372 aa).

Position 192 is an N6-(pyridoxal phosphate)lysine (Lys192).

This sequence belongs to the class-V pyridoxal-phosphate-dependent aminotransferase family. PhnW subfamily. Homodimer. The cofactor is pyridoxal 5'-phosphate.

It carries out the reaction (2-aminoethyl)phosphonate + pyruvate = phosphonoacetaldehyde + L-alanine. Its function is as follows. Involved in phosphonate degradation. The polypeptide is 2-aminoethylphosphonate--pyruvate transaminase 2 (Polaromonas sp. (strain JS666 / ATCC BAA-500)).